The sequence spans 107 residues: DNA-directed RNA polymerase subunit omega (107 aa).

The protein belongs to the RNA polymerase subunit omega family. As to quaternary structure, the RNAP catalytic core consists of 2 alpha, 1 beta, 1 beta' and 1 omega subunit. When a sigma factor is associated with the core the holoenzyme is formed, which can initiate transcription.

The enzyme catalyses RNA(n) + a ribonucleoside 5'-triphosphate = RNA(n+1) + diphosphate. Promotes RNA polymerase assembly. Latches the N- and C-terminal regions of the beta' subunit thereby facilitating its interaction with the beta and alpha subunits. The polypeptide is DNA-directed RNA polymerase subunit omega (Oenococcus oeni (strain ATCC BAA-331 / PSU-1)).